Reading from the N-terminus, the 312-residue chain is Protoheme IX farnesyltransferase (312 aa).

9 helical membrane passes run 31–51 (LLMK…GLFI), 58–78 (PLLS…AGAI), 107–127 (TALT…AICV), 130–150 (ISSI…TMWL), 157–177 (NIVI…SAVT), 184–204 (CLML…TLSL), 229–249 (YSIL…YFTD), 250–270 (IAGL…LCYA), and 286–306 (FKYS…EHCI).

Belongs to the UbiA prenyltransferase family. Protoheme IX farnesyltransferase subfamily.

The protein localises to the cell inner membrane. It carries out the reaction heme b + (2E,6E)-farnesyl diphosphate + H2O = Fe(II)-heme o + diphosphate. It participates in porphyrin-containing compound metabolism; heme O biosynthesis; heme O from protoheme: step 1/1. Converts heme B (protoheme IX) to heme O by substitution of the vinyl group on carbon 2 of heme B porphyrin ring with a hydroxyethyl farnesyl side group. This Orientia tsutsugamushi (strain Ikeda) (Rickettsia tsutsugamushi) protein is Protoheme IX farnesyltransferase.